A 206-amino-acid polypeptide reads, in one-letter code: Probable metallo-hydrolase MJ0888 (206 aa).

Zn(2+) contacts are provided by His55, His57, Asp59, His60, His130, Asp147, and His190.

This sequence belongs to the metallo-beta-lactamase superfamily. It depends on Zn(2+) as a cofactor.

This Methanocaldococcus jannaschii (strain ATCC 43067 / DSM 2661 / JAL-1 / JCM 10045 / NBRC 100440) (Methanococcus jannaschii) protein is Probable metallo-hydrolase MJ0888.